Reading from the N-terminus, the 286-residue chain is Thymidylate synthase (286 aa).

140–141 contributes to the dUMP binding site; it reads RR. The active-site Nucleophile is C161. Residues 185–188, N196, and 226–228 contribute to the dUMP site; these read RSND and HIY. Residue D188 coordinates (6R)-5,10-methylene-5,6,7,8-tetrahydrofolate. A285 serves as a coordination point for (6R)-5,10-methylene-5,6,7,8-tetrahydrofolate.

The protein belongs to the thymidylate synthase family. Bacterial-type ThyA subfamily. As to quaternary structure, homodimer.

The protein localises to the cytoplasm. It catalyses the reaction dUMP + (6R)-5,10-methylene-5,6,7,8-tetrahydrofolate = 7,8-dihydrofolate + dTMP. It participates in pyrimidine metabolism; dTTP biosynthesis. In terms of biological role, catalyzes the reductive methylation of 2'-deoxyuridine-5'-monophosphate (dUMP) to 2'-deoxythymidine-5'-monophosphate (dTMP) while utilizing 5,10-methylenetetrahydrofolate (mTHF) as the methyl donor and reductant in the reaction, yielding dihydrofolate (DHF) as a by-product. This enzymatic reaction provides an intracellular de novo source of dTMP, an essential precursor for DNA biosynthesis. In Streptococcus thermophilus (strain ATCC BAA-250 / LMG 18311), this protein is Thymidylate synthase.